Reading from the N-terminus, the 290-residue chain is MDIEAYFERIGYKNSVNKLDLATLTEVLQHQMRAVPFENLSMHCGEAMCLGLEATFDHIVRKKRGGWCLQVNHLLYWALTKMGFETTMLGGYVYITPVNKYSSEMVHLLVQVTISDRNYIVDSAYGSSYQMWEPLELTSGKDQPQVPAIFRLTEENGTWYLDQIRREQDVPNQEFVNSDLLEKSKYRKIYSFTLEPRTIEDFEYVNTYLQTSPASVFVSTSFCSLQTSEGVCCLIGSTLTSRRFSYKDNVDLVEFKSLTEEEIEDVLKTTFGISLEKKFVPKHGELVFTI.

Met-1 is subject to N-acetylmethionine. Cys-68 acts as the Acyl-thioester intermediate in catalysis. CoA is bound at residue Ser-103. 106 to 107 (VH) serves as a coordination point for substrate. Catalysis depends on residues His-107 and Asp-122. CoA is bound at residue Tyr-208.

This sequence belongs to the arylamine N-acetyltransferase family.

The protein localises to the cytoplasm. The enzyme catalyses an arylamine + acetyl-CoA = an N-acetylarylamine + CoA. Functionally, participates in the detoxification of a plethora of hydrazine and arylamine drugs. Acetylates both arylamines and arylalkylamines. The protein is Arylamine N-acetyltransferase 1 (Nat1) of Rattus norvegicus (Rat).